We begin with the raw amino-acid sequence, 230 residues long: Ribonuclease HII (230 aa).

One can recognise an RNase H type-2 domain in the interval 1 to 224 (MIIIGIDEAG…CKRILDKSKQ (224 aa)). A divalent metal cation is bound by residues Asp-7, Glu-8, and Asp-112.

This sequence belongs to the RNase HII family. Mn(2+) is required as a cofactor. The cofactor is Mg(2+).

Its subcellular location is the cytoplasm. The enzyme catalyses Endonucleolytic cleavage to 5'-phosphomonoester.. Its function is as follows. Endonuclease that specifically degrades the RNA of RNA-DNA hybrids. This is Ribonuclease HII (rnhB) from Methanocaldococcus jannaschii (strain ATCC 43067 / DSM 2661 / JAL-1 / JCM 10045 / NBRC 100440) (Methanococcus jannaschii).